The chain runs to 345 residues: Fructose-bisphosphate aldolase (345 aa).

Residue serine 53 participates in D-glyceraldehyde 3-phosphate binding. Residue aspartate 95 is the Proton donor of the active site. Histidine 96, aspartate 131, glutamate 161, and histidine 212 together coordinate Zn(2+). Dihydroxyacetone phosphate is bound at residue glycine 213. Histidine 252 serves as a coordination point for Zn(2+). Dihydroxyacetone phosphate is bound by residues 253–255 and 274–277; these read GGS and NVDT.

Belongs to the class II fructose-bisphosphate aldolase family. It depends on Zn(2+) as a cofactor.

The enzyme catalyses beta-D-fructose 1,6-bisphosphate = D-glyceraldehyde 3-phosphate + dihydroxyacetone phosphate. The protein operates within carbohydrate degradation; glycolysis; D-glyceraldehyde 3-phosphate and glycerone phosphate from D-glucose: step 4/4. Catalyzes the aldol condensation of dihydroxyacetone phosphate (DHAP or glycerone-phosphate) with glyceraldehyde 3-phosphate (G3P) to form fructose 1,6-bisphosphate (FBP) in gluconeogenesis and the reverse reaction in glycolysis. In Mycobacterium leprae (strain TN), this protein is Fructose-bisphosphate aldolase (fba).